The following is a 455-amino-acid chain: Phosphomethylpyrimidine synthase (455 aa).

Residues asparagine 80, methionine 109, tyrosine 139, histidine 175, serine 195–glycine 197, aspartate 236–arginine 239, and glutamate 275 contribute to the substrate site. Residue histidine 279 coordinates Zn(2+). Residue tyrosine 302 participates in substrate binding. Zn(2+) is bound at residue histidine 343. 3 residues coordinate [4Fe-4S] cluster: cysteine 423, cysteine 426, and cysteine 431.

It belongs to the ThiC family. It depends on [4Fe-4S] cluster as a cofactor.

It catalyses the reaction 5-amino-1-(5-phospho-beta-D-ribosyl)imidazole + S-adenosyl-L-methionine = 4-amino-2-methyl-5-(phosphooxymethyl)pyrimidine + CO + 5'-deoxyadenosine + formate + L-methionine + 3 H(+). The protein operates within cofactor biosynthesis; thiamine diphosphate biosynthesis. Catalyzes the synthesis of the hydroxymethylpyrimidine phosphate (HMP-P) moiety of thiamine from aminoimidazole ribotide (AIR) in a radical S-adenosyl-L-methionine (SAM)-dependent reaction. The protein is Phosphomethylpyrimidine synthase of Synechococcus sp. (strain JA-2-3B'a(2-13)) (Cyanobacteria bacterium Yellowstone B-Prime).